A 249-amino-acid chain; its full sequence is tRNA uridine(34) hydroxylase (249 aa).

A Rhodanese domain is found at 124 to 218 (TKQDVIVIDT…YLEDTQNKNN (95 aa)). Cysteine 178 functions as the Cysteine persulfide intermediate in the catalytic mechanism.

The protein belongs to the TrhO family.

It carries out the reaction uridine(34) in tRNA + AH2 + O2 = 5-hydroxyuridine(34) in tRNA + A + H2O. In terms of biological role, catalyzes oxygen-dependent 5-hydroxyuridine (ho5U) modification at position 34 in tRNAs. In Rickettsia canadensis (strain McKiel), this protein is tRNA uridine(34) hydroxylase.